A 92-amino-acid polypeptide reads, in one-letter code: Small ribosomal subunit protein uS19 (92 aa).

Belongs to the universal ribosomal protein uS19 family.

In terms of biological role, protein S19 forms a complex with S13 that binds strongly to the 16S ribosomal RNA. This is Small ribosomal subunit protein uS19 from Parvibaculum lavamentivorans (strain DS-1 / DSM 13023 / NCIMB 13966).